Here is a 152-residue protein sequence, read N- to C-terminus: Dynein light chain Tctex-type protein 2B (152 aa).

The protein belongs to the dynein light chain Tctex-type family. As to quaternary structure, light chain of the cytoplasmic dynein complex 2, a multisubunit complex composed at least of eleven different proteins. The cytoplasmic dynein 2 complex consists of two catalytic heavy chains (HCs) and a number of non-catalytic subunits presented by intermediate chains (ICs), light intermediate chains (LICs) and light chains (LCs). Among them, a heavy chain (DYNC2H1), two intermediate chains (DYNC2I2 and DYNC2I1), a light intermediate chain (DYNC2LI1), and a light chain (DYNLT2B) are unique to the dynein-2 complex, but a subset of the light chains are also shared by dynein-1 and dynein-2 complexes. The dimer DYNLT2B-DYNLT1/DYNLT3 interacts with DYNC2I1; this interaction is crucial for retrograde trafficking of ciliary proteins.

Its subcellular location is the dynein axonemal particle. Acts as one of several non-catalytic accessory components of the cytoplasmic dynein 2 complex (dynein-2 complex), a motor protein complex that drives the movement of cargos along microtubules within cilia and flagella in concert with the intraflagellar transport (IFT) system. Required for proper retrograde ciliary transport. The sequence is that of Dynein light chain Tctex-type protein 2B (DYNLT2B) from Bos taurus (Bovine).